A 477-amino-acid chain; its full sequence is D(1B) dopamine receptor (477 aa).

Over 1 to 39 (MLPPGSNGTAYPGQFALYQQLAQGNAVGGSAGAPPLGPS) the chain is Extracellular. The N-linked (GlcNAc...) asparagine glycan is linked to Asn7. The helical transmembrane segment at 40–66 (QVVTACLLTLLIIWTLLGNVLVCAAIV) threads the bilayer. Over 67–77 (RSRHLRANMTN) the chain is Cytoplasmic. A helical transmembrane segment spans residues 78-104 (VFIVSLAVSDLFVALLVMPWKAVAEVA). Topologically, residues 105 to 114 (GYWPFGAFCD) are extracellular. An intrachain disulfide couples Cys113 to Cys217. A helical transmembrane segment spans residues 115–136 (VWVAFDIMCSTASILNLCVISV). The Cytoplasmic segment spans residues 137-158 (DRYWAISRPFRYKRKMTQRMAL). Residues 159–180 (VMVGLAWTLSILISFIPVQLNW) traverse the membrane as a helical segment. Topologically, residues 181–223 (HRDQAASWGGLDLPNNLANWTPWEEDFWEPDVNAENCDSSLNR) are extracellular. Asn222 carries an N-linked (GlcNAc...) asparagine glycan. A helical transmembrane segment spans residues 224–246 (TYAISSSLISFYIPVAIMIVTYT). Residues 247–296 (RIYRIAQVQIRRISSLERAAEHAQSCRSSAACAPDTSLRASIKKETKVLK) lie on the Cytoplasmic side of the membrane. A helical transmembrane segment spans residues 297 to 320 (TLSVIMGVFVCCWLPFFILNCMVP). The Extracellular portion of the chain corresponds to 321-340 (FCSGHPEGPPAGFPCVSETT). Residues 341–360 (FDVFVWFGWANSSLNPVIYA) traverse the membrane as a helical segment. The Cytoplasmic portion of the chain corresponds to 361-477 (FNADFQKVFA…ITPFTPNGFH (117 aa)). Cys375 carries S-palmitoyl cysteine lipidation.

It belongs to the G-protein coupled receptor 1 family. Neuron-specific, localized primarily within limbic regions of the brain.

The protein resides in the cell membrane. In terms of biological role, dopamine receptor whose activity is mediated by G proteins which activate adenylyl cyclase. The protein is D(1B) dopamine receptor (DRD5) of Homo sapiens (Human).